The primary structure comprises 151 residues: Desiccation-related protein PCC27-45 (151 aa).

Belongs to the LEA type 2 family.

The protein is Desiccation-related protein PCC27-45 of Craterostigma plantagineum (Blue gem).